The chain runs to 259 residues: Ribosomal RNA small subunit methyltransferase J (259 aa).

Residues 101–102 (RD), 117–118 (ER), 153–154 (SS), and Asp-176 each bind S-adenosyl-L-methionine.

Belongs to the methyltransferase superfamily. RsmJ family.

It is found in the cytoplasm. It catalyses the reaction guanosine(1516) in 16S rRNA + S-adenosyl-L-methionine = N(2)-methylguanosine(1516) in 16S rRNA + S-adenosyl-L-homocysteine + H(+). Functionally, specifically methylates the guanosine in position 1516 of 16S rRNA. The polypeptide is Ribosomal RNA small subunit methyltransferase J (Vibrio vulnificus (strain CMCP6)).